Consider the following 189-residue polypeptide: NADH-ubiquinone oxidoreductase 20.9 kDa subunit (189 aa).

The chain crosses the membrane as a helical span at residues 73–88; that stretch reads AMRLATAVGFFGGFLY.

Complex I is composed of about 40 different subunits. The N-terminus is blocked.

The protein resides in the mitochondrion inner membrane. The enzyme catalyses a ubiquinone + NADH + 5 H(+)(in) = a ubiquinol + NAD(+) + 4 H(+)(out). Transfer of electrons from NADH to the respiratory chain. The immediate electron acceptor for the enzyme is believed to be ubiquinone. The protein is NADH-ubiquinone oxidoreductase 20.9 kDa subunit (nuo20.9) of Neurospora crassa (strain ATCC 24698 / 74-OR23-1A / CBS 708.71 / DSM 1257 / FGSC 987).